A 637-amino-acid polypeptide reads, in one-letter code: Early transcription factor 70 kDa subunit (637 aa).

Residues 32-185 (RTIIDENRSV…GHIIDLMSEE (154 aa)) enclose the Helicase ATP-binding domain. ATP is bound at residue 45–52 (HIMGSGKT). The DEXH box motif lies at 135 to 138 (DEAH). The 181-residue stretch at 327–507 (KFKYFINRIQ…VLPFDIKKLL (181 aa)) folds into the Helicase C-terminal domain.

Belongs to the helicase family. VETF subfamily. Heterodimer of a 70 kDa and a 82 kDa subunit. Part of the early transcription complex composed of ETF, RAP94/OPG109, and the DNA-directed RNA polymerase.

The protein resides in the virion. Its function is as follows. Acts with RNA polymerase to initiate transcription from early gene promoters. Is recruited by the RPO-associated protein of 94 kDa RAP94/OPG109 to form the early transcription complex, which also contains the core RNA polymerase. ETF heterodimer binds to early gene promoters. The protein is Early transcription factor 70 kDa subunit (OPG118) of Homo sapiens (Human).